Reading from the N-terminus, the 263-residue chain is Probable ribosomal RNA small subunit methyltransferase A (263 aa).

Positions 12, 37, 58, 83, and 100 each coordinate S-adenosyl-L-methionine.

The protein belongs to the class I-like SAM-binding methyltransferase superfamily. rRNA adenine N(6)-methyltransferase family. RsmA subfamily.

It localises to the cytoplasm. Functionally, specifically dimethylates two adjacent adenosines in the loop of a conserved hairpin near the 3'-end of 16S rRNA in the 30S particle. May play a critical role in biogenesis of 30S subunits. This is Probable ribosomal RNA small subunit methyltransferase A from Methanococcus maripaludis (strain C5 / ATCC BAA-1333).